The sequence spans 71 residues: Antitoxin VapB22 (71 aa).

This sequence belongs to the phD/YefM antitoxin family.

Functionally, antitoxin component of a type II toxin-antitoxin (TA) system. Upon expression in M.smegmatis neutralizes the effect of cognate toxin VapC22. This is Antitoxin VapB22 (vapB22) from Mycobacterium tuberculosis (strain ATCC 25618 / H37Rv).